The following is a 389-amino-acid chain: GTPase Obg (389 aa).

An Obg domain is found at 1–159 (MKFVDEAKIL…REVLLELMLL (159 aa)). Positions 160–333 (ADVGMLGMPN…LCWDIMEFLK (174 aa)) constitute an OBG-type G domain. GTP is bound by residues 166-173 (GMPNAGKS), 191-195 (FTTLV), 213-216 (DIPG), 283-286 (NKVD), and 314-316 (AAI). Mg(2+) is bound by residues Ser173 and Thr193. The disordered stretch occupies residues 362 to 389 (QLENPDLEDDDEDWDEEDDDGVEFIYQR). Acidic residues predominate over residues 364–383 (ENPDLEDDDEDWDEEDDDGV).

It belongs to the TRAFAC class OBG-HflX-like GTPase superfamily. OBG GTPase family. As to quaternary structure, monomer. Requires Mg(2+) as cofactor.

The protein localises to the cytoplasm. Its function is as follows. An essential GTPase which binds GTP, GDP and possibly (p)ppGpp with moderate affinity, with high nucleotide exchange rates and a fairly low GTP hydrolysis rate. Plays a role in control of the cell cycle, stress response, ribosome biogenesis and in those bacteria that undergo differentiation, in morphogenesis control. The polypeptide is GTPase Obg (Proteus mirabilis (strain HI4320)).